A 600-amino-acid polypeptide reads, in one-letter code: Methionine--tRNA ligase (600 aa).

Positions 12–22 match the 'HIGH' region motif; the sequence is PYANGPRHIGH. Residues Cys-144, Cys-147, Cys-157, and Cys-160 each coordinate Zn(2+). The short motif at 351 to 355 is the 'KMSKS' region element; the sequence is KFSSS. Ser-354 is a binding site for ATP.

This sequence belongs to the class-I aminoacyl-tRNA synthetase family. MetG type 1 subfamily. As to quaternary structure, monomer. It depends on Zn(2+) as a cofactor.

The protein localises to the cytoplasm. It carries out the reaction tRNA(Met) + L-methionine + ATP = L-methionyl-tRNA(Met) + AMP + diphosphate. Is required not only for elongation of protein synthesis but also for the initiation of all mRNA translation through initiator tRNA(fMet) aminoacylation. This Chloroflexus aurantiacus (strain ATCC 29364 / DSM 637 / Y-400-fl) protein is Methionine--tRNA ligase.